The chain runs to 149 residues: Nucleoside diphosphate kinase (149 aa).

ATP is bound by residues Lys-9, Phe-57, Arg-85, Thr-91, Arg-102, and Asn-112. Catalysis depends on His-115, which acts as the Pros-phosphohistidine intermediate.

The protein belongs to the NDK family. As to quaternary structure, homotetramer. It depends on Mg(2+) as a cofactor.

It localises to the cytoplasm. It catalyses the reaction a 2'-deoxyribonucleoside 5'-diphosphate + ATP = a 2'-deoxyribonucleoside 5'-triphosphate + ADP. It carries out the reaction a ribonucleoside 5'-diphosphate + ATP = a ribonucleoside 5'-triphosphate + ADP. Its function is as follows. Major role in the synthesis of nucleoside triphosphates other than ATP. The ATP gamma phosphate is transferred to the NDP beta phosphate via a ping-pong mechanism, using a phosphorylated active-site intermediate. This chain is Nucleoside diphosphate kinase, found in Pelotomaculum thermopropionicum (strain DSM 13744 / JCM 10971 / SI).